The chain runs to 1050 residues: MARNDWINSYLEAILDVGTSKKKRFESNSKIVQKLGDINSKDHQEKVFGDMNGKDHQEKVFSPIKYFVEEVVNSFDESDLYKTWIKVIATRNTRERSNRLENICWRIWHLARKKKQIVWDDGVRLSKRRIEREQGRNDAEEDLLSELSEGEKDKNDGEKEKSEVVTTLEPPRDHMPRIRSEMQIWSEDDKSSRNLYIVLISMHGLVRGENMELGRDSDTGGQVKYVVELARALANTEGVHRVDLLTRQISSPEVDYSYGEPVEMLSCPPEGSDSCGSYIIRIPCGSRDKYIPKESLWPHIPEFVDGALNHIVSIARSLGEQVNGGKPIWPYVIHGHYADAGEVAAHLAGALNVPMVLTGHSLGRNKFEQLLQQGRITREDIDRTYKIMRRIEAEEQSLDAAEMVVTSTRQEIDAQWGLYDGFDIKLERKLRVRRRRGVSCLGRYMPRMVVIPPGMDFSYVLTQDSQEPDGDLKSLIGPDRNQIKKPVPPIWSEIMRFFSNPHKPTILALSRPDHKKNVTTLVKAFGECQPLRELANLVLILGNRDDIEEMPNSSSVVLMNVLKLIDQYDLYGQVAYPKHHKQSEVPDIYRLAAKTKGVFINPALVEPFGLTLIEAAAYGLPIVATRNGGPVDIVKALNNGLLVDPHDQQAISDALLKLVANKHLWAECRKNGLKNIHRFSWPEHCRNYLSHVEHCRNRHPTSSLDIMKVPEELTSDSLRDVDDISLRFSTEGDFTLNGELDAGTRQKKLVDAISQMNSMKGCSAAIYSPGRRQMLFVVAVDSYDDNGNIKANLNEIIKNMIKAADLTSGKGKIGFVLASGSSLQEVVDITQKNLINLEDFDAIVCNSGSEIYYPWRDMMVDADYETHVEYKWPGESIRSVILRLICTEPAAEDDITEYASSCSTRCYAISVKQGVKTRRVDDLRQRLRMRGLRCNIVYTHAATRLNVIPLCASRIQALRYLSIRWGIDMSKTVFFLGEKGDTDYEDLLGGLHKTIILKGVVGSDSEKLLRSEENFKREDAVPQESPNISYVKENGGSQEIMSTLEAYGIK.

The interval 134–167 is disordered; the sequence is QGRNDAEEDLLSELSEGEKDKNDGEKEKSEVVTT. Ser148 is subject to Phosphoserine. The span at 149 to 163 shows a compositional bias: basic and acidic residues; that stretch reads EGEKDKNDGEKEKSE. Residue Ser180 is modified to Phosphoserine.

Belongs to the glycosyltransferase 1 family. Homodimer or homotetramer.

The enzyme catalyses beta-D-fructose 6-phosphate + UDP-alpha-D-glucose = sucrose 6(F)-phosphate + UDP + H(+). Its pathway is glycan biosynthesis; sucrose biosynthesis; sucrose from D-fructose 6-phosphate and UDP-alpha-D-glucose: step 1/2. Activity is regulated by phosphorylation and moderated by concentration of metabolites and light. Plays a role in photosynthetic sucrose synthesis by catalyzing the rate-limiting step of sucrose biosynthesis from UDP-glucose and fructose- 6-phosphate. Involved in the regulation of carbon partitioning in the leaves of plants. May regulate the synthesis of sucrose and therefore play a major role as a limiting factor in the export of photoassimilates out of the leaf. Plays a role for sucrose availability that is essential for plant growth and fiber elongation. This chain is Sucrose-phosphate synthase 4, found in Arabidopsis thaliana (Mouse-ear cress).